The sequence spans 438 residues: GTPase Der (438 aa).

2 consecutive EngA-type G domains span residues 4–169 (PVVA…PEKG) and 178–353 (IDVA…DQNS). GTP-binding positions include 10 to 17 (GRPNVGKS), 57 to 61 (DTGGI), 120 to 123 (NKVD), 184 to 191 (GKPNVGKS), 231 to 235 (DTAGL), and 296 to 299 (NKWD). Residues 354-438 (RRVKTGLLNE…PIRLKFKQKT (85 aa)) enclose the KH-like domain.

The protein belongs to the TRAFAC class TrmE-Era-EngA-EngB-Septin-like GTPase superfamily. EngA (Der) GTPase family. In terms of assembly, associates with the 50S ribosomal subunit.

Its function is as follows. GTPase that plays an essential role in the late steps of ribosome biogenesis. In Halothermothrix orenii (strain H 168 / OCM 544 / DSM 9562), this protein is GTPase Der.